Reading from the N-terminus, the 486-residue chain is Elastin-binding protein EbpS (486 aa).

Over residues 1 to 40 (MSNNFKDDFEKNRQSIDTNSHQDHTEDVEKDQSELEHQDT) the composition is skewed to basic and acidic residues. A disordered region spans residues 1-314 (MSNNFKDDFE…NHDRDKERKK (314 aa)). Over 2-204 (SNNFKDDFEK…ESKDHHSGKK (203 aa)) the chain is Extracellular. The interval 14–34 (QSIDTNSHQDHTEDVEKDQSE) is elastin-binding. Residues 64 to 85 (TNHNKQVHNESQTSEDNVQNEA) show a composition bias toward polar residues. 3 stretches are compositionally biased toward basic and acidic residues: residues 103-118 (EPSH…EEYY), 126-160 (DKSH…KSEA), and 180-199 (SKDK…SKDH). Low complexity-rich tracts occupy residues 204 to 225 (KGAA…MGVS) and 233 to 246 (DAQN…SNNS). Residues 205-225 (GAAIGAGTAGVAGAAGAMGVS) traverse the membrane as a helical segment. Residues 226 to 319 (KAKKHSNDAQ…KERKKGGMAK (94 aa)) are Cytoplasmic-facing. Positions 247 to 259 (TEDKVSQDKSKDH) are enriched in basic and acidic residues. Residues 278 to 297 (GAASKSASAASKPHASNNAS) show a composition bias toward low complexity. A compositionally biased stretch (basic and acidic residues) spans 299–314 (NHDEHDNHDRDKERKK). A helical membrane pass occupies residues 320-340 (VLLPLIAAVLIIGALAIFGGM). The Extracellular segment spans residues 341–486 (ALNNHNNGTK…IRNGQQIVIP (146 aa)). A disordered region spans residues 351 to 440 (ENKIANTNKN…QRQGGGQRHT (90 aa)). A compositionally biased stretch (basic and acidic residues) spans 361-398 (NADESKDKDTSKDASKDKSKSTDSDKSKEDQDKATKDE). Residues 403–431 (QNNANQANNQAQNNQNQQQANQNQQQQQQ) are compositionally biased toward low complexity. The LysM domain occupies 437 to 485 (QRHTVNGQENLYRIAIQYYGSGSPENVEKIRRANGLSGNNIRNGQQIVI).

The protein resides in the cell membrane. Promotes binding of soluble elastin peptides and tropoelastin to S.aureus cells although it is not able to promote bacterial adherence to immobilized elastin and, therefore, is not a microbial surface component recognizing adhesive matrix molecule (MSCRAMM). The polypeptide is Elastin-binding protein EbpS (ebpS) (Staphylococcus aureus (strain MSSA476)).